Reading from the N-terminus, the 203-residue chain is Outer-membrane lipoprotein carrier protein (203 aa).

Positions 1-21 (MKKLLVACCLLSGLISAHALA) are cleaved as a signal peptide.

It belongs to the LolA family. Monomer.

Its subcellular location is the periplasm. Functionally, participates in the translocation of lipoproteins from the inner membrane to the outer membrane. Only forms a complex with a lipoprotein if the residue after the N-terminal Cys is not an aspartate (The Asp acts as a targeting signal to indicate that the lipoprotein should stay in the inner membrane). The polypeptide is Outer-membrane lipoprotein carrier protein (Yersinia enterocolitica serotype O:8 / biotype 1B (strain NCTC 13174 / 8081)).